A 145-amino-acid polypeptide reads, in one-letter code: MDQQIRLVEAKYKKEAILPFEIGDTVKVWVKIIEGDRERLQAYEGTVISIRGKGINKSFIVRKISYGVGVERIFLLNSPRIDHVDIIRKAKVRRAKLYYLRNKVGKKARLVERLGVKIPKHSDLIKNTTEENASAAEENNSSSAE.

Belongs to the bacterial ribosomal protein bL19 family.

Its function is as follows. This protein is located at the 30S-50S ribosomal subunit interface and may play a role in the structure and function of the aminoacyl-tRNA binding site. The chain is Large ribosomal subunit protein bL19 from Brachyspira hyodysenteriae (strain ATCC 49526 / WA1).